Here is a 332-residue protein sequence, read N- to C-terminus: MATSIKDVAREAGVSIATVSRVLNDIDVVNEDTKKKVLDAIKELGYRPNIVARSLKTQRTKTIGILLPDISNQFYPEIVRGAEDVSNIYDYNIILCNSDLDIEKEKEYLRVLKEKMVDGVIYMSSSLRDEILELINELDLKTVLVETRDKDGVLPSVTIDNIKGSYDSTNLLIQKGIKDIAFIGTKKDNMNAWGDRYVGYEKAMNEAGIKIDPELLYLDSIKVKSGYEGIQHFLGLNKKFKGVVCASDDIAMGAINALRDNNMEVPKDVSVVGFNDNFAASIFYPKITTVSQPTYDMGSVAMRMLIKLLNKKELDEPNYVLEHELIERESTI.

Residues 1 to 57 form the HTH lacI-type domain; it reads MATSIKDVAREAGVSIATVSRVLNDIDVVNEDTKKKVLDAIKELGYRPNIVARSLKT. The segment at residues 5–24 is a DNA-binding region (H-T-H motif); it reads IKDVAREAGVSIATVSRVLN.

In terms of biological role, involved in the regulation of amylase production. The protein is HTH-type transcriptional regulator RegA (regA) of Clostridium saccharobutylicum.